A 439-amino-acid polypeptide reads, in one-letter code: Acyl-coenzyme A thioesterase 10, mitochondrial (439 aa).

The transit peptide at 1 to 21 directs the protein to the mitochondrion; it reads MKRAAMRLWTLNKGLLTHGRG. HotDog ACOT-type domains lie at 85–209 and 289–401; these read SYIE…QDSE and EDTK…EKEV.

It belongs to the acyl coenzyme A hydrolase family.

It is found in the mitochondrion. In terms of biological role, catalyzes the hydrolysis of acyl-CoAs into free fatty acids and coenzyme A (CoASH), regulating their respective intracellular levels. Active on long chain acyl-CoAs. The chain is Acyl-coenzyme A thioesterase 10, mitochondrial from Mus musculus (Mouse).